The following is a 331-amino-acid chain: MSDILAVAREQVLERGVGLNQDQTLQVLQLPDDRLDDLLALAHEVRMAWCGPDVEVEGIISLKTGGCPEDCHFCSQSGLFASPVRSAWLDVPSLVEAAKQTAKTGATEFCIVAAVRGPDERLLAQVAAGIEAIRNEVDIQIACSLGMLTAEQVERLSEMGVHRYNHNLETARSFFTNVVTTHTWEERWDTLRMVREAGMEVCCGGILGMGETLEQRAEFAANLAELDPHEVPLNFLNPRPGTPFGDLEVLPAAEALKAVAAFRLALPRTMLRFAGGREITLGDLGAKKGILGGINAVIVGNYLTTLGRPAEADLELLDDLQMPIKALNASL.

Residues 52-277 (PDVEVEGIIS…RTMLRFAGGR (226 aa)) enclose the Radical SAM core domain. [4Fe-4S] cluster is bound by residues Cys-67, Cys-71, and Cys-74. Positions 110, 143, 202, and 272 each coordinate [2Fe-2S] cluster.

It belongs to the radical SAM superfamily. Biotin synthase family. Homodimer. It depends on [4Fe-4S] cluster as a cofactor. The cofactor is [2Fe-2S] cluster.

The catalysed reaction is (4R,5S)-dethiobiotin + (sulfur carrier)-SH + 2 reduced [2Fe-2S]-[ferredoxin] + 2 S-adenosyl-L-methionine = (sulfur carrier)-H + biotin + 2 5'-deoxyadenosine + 2 L-methionine + 2 oxidized [2Fe-2S]-[ferredoxin]. The protein operates within cofactor biosynthesis; biotin biosynthesis; biotin from 7,8-diaminononanoate: step 2/2. Its function is as follows. Catalyzes the conversion of dethiobiotin (DTB) to biotin by the insertion of a sulfur atom into dethiobiotin via a radical-based mechanism. The chain is Biotin synthase from Mycobacterium sp. (strain JLS).